Reading from the N-terminus, the 235-residue chain is uncharacterized protein (235 aa).

The region spanning 2–69 (CRLAKIISNA…KPRLWIYYKP (68 aa)) is the S4 RNA-binding domain. Catalysis depends on Asp102, which acts as the Nucleophile.

This sequence belongs to the pseudouridine synthase RsuA family.

It catalyses the reaction a uridine in RNA = a pseudouridine in RNA. This is an uncharacterized protein from Rickettsia prowazekii (strain Madrid E).